We begin with the raw amino-acid sequence, 348 residues long: D-alanine--D-alanine ligase (348 aa).

In terms of domain architecture, ATP-grasp spans 132 to 334 (KRVLESIGIP…YPDLIEELVT (203 aa)). Position 162 to 217 (162 to 217 (LARLTFPIFVKPANMGSSVGISKAQTKVELRKAIQLALTYDSRVLIEQGVVAREIE)) interacts with ATP. Mg(2+) contacts are provided by D288, E301, and N303.

It belongs to the D-alanine--D-alanine ligase family. Requires Mg(2+) as cofactor. It depends on Mn(2+) as a cofactor.

Its subcellular location is the cytoplasm. The catalysed reaction is 2 D-alanine + ATP = D-alanyl-D-alanine + ADP + phosphate + H(+). The protein operates within cell wall biogenesis; peptidoglycan biosynthesis. Its function is as follows. Cell wall formation. This is D-alanine--D-alanine ligase from Streptococcus pyogenes serotype M6 (strain ATCC BAA-946 / MGAS10394).